Here is a 430-residue protein sequence, read N- to C-terminus: Probable transporter SCO4007 (430 aa).

Over residues Met1–Ala17 the composition is skewed to low complexity. Residues Met1 to Gly26 form a disordered region. 11 consecutive transmembrane segments (helical) span residues Leu34–Ala54, Ala70–Ala90, Leu101–Gly121, Ala126–Val146, Val159–Leu179, Ala188–Leu208, Ala244–Gly264, Gly275–Val295, Val315–Val335, Thr362–Ala382, and Phe383–Trp403.

It belongs to the major facilitator superfamily.

The protein resides in the cell membrane. The protein is Probable transporter SCO4007 of Streptomyces coelicolor (strain ATCC BAA-471 / A3(2) / M145).